Reading from the N-terminus, the 81-residue chain is Costars family protein ABRACL (81 aa).

It belongs to the costars family.

This is Costars family protein ABRACL (abracl) from Danio rerio (Zebrafish).